Reading from the N-terminus, the 120-residue chain is Small ribosomal subunit protein uS13 (120 aa).

The segment at 96 to 120 (PCRGQRTRTNARTRKGPRKAIAGKK) is disordered.

This sequence belongs to the universal ribosomal protein uS13 family. As to quaternary structure, part of the 30S ribosomal subunit. Forms a loose heterodimer with protein S19. Forms two bridges to the 50S subunit in the 70S ribosome.

Located at the top of the head of the 30S subunit, it contacts several helices of the 16S rRNA. In the 70S ribosome it contacts the 23S rRNA (bridge B1a) and protein L5 of the 50S subunit (bridge B1b), connecting the 2 subunits; these bridges are implicated in subunit movement. Contacts the tRNAs in the A and P-sites. In Neisseria gonorrhoeae (strain ATCC 700825 / FA 1090), this protein is Small ribosomal subunit protein uS13.